The chain runs to 440 residues: Probable exopolygalacturonase B (440 aa).

A signal peptide spans 1 to 20; the sequence is MRLHFLPLVALCATTASSLA. 3 N-linked (GlcNAc...) asparagine glycosylation sites follow: Asn-65, Asn-190, and Asn-230. The active-site Proton donor is the Asp-260. Cys-262 and Cys-279 are disulfide-bonded. N-linked (GlcNAc...) asparagine glycans are attached at residues Asn-268 and Asn-280. His-283 is a catalytic residue. Residues Asn-307, Asn-334, and Asn-371 are each glycosylated (N-linked (GlcNAc...) asparagine). Cysteines 397 and 403 form a disulfide. Asn-412 carries N-linked (GlcNAc...) asparagine glycosylation.

It belongs to the glycosyl hydrolase 28 family.

The protein resides in the secreted. The catalysed reaction is [(1-&gt;4)-alpha-D-galacturonosyl](n) + H2O = alpha-D-galacturonate + [(1-&gt;4)-alpha-D-galacturonosyl](n-1). Specific in hydrolyzing the terminal glycosidic bond of polygalacturonic acid and oligogalacturonates. In Emericella nidulans (strain FGSC A4 / ATCC 38163 / CBS 112.46 / NRRL 194 / M139) (Aspergillus nidulans), this protein is Probable exopolygalacturonase B (pgxB).